A 179-amino-acid polypeptide reads, in one-letter code: ATP synthase subunit delta (179 aa).

This sequence belongs to the ATPase delta chain family. F-type ATPases have 2 components, F(1) - the catalytic core - and F(0) - the membrane proton channel. F(1) has five subunits: alpha(3), beta(3), gamma(1), delta(1), epsilon(1). F(0) has three main subunits: a(1), b(2) and c(10-14). The alpha and beta chains form an alternating ring which encloses part of the gamma chain. F(1) is attached to F(0) by a central stalk formed by the gamma and epsilon chains, while a peripheral stalk is formed by the delta and b chains.

Its subcellular location is the cell inner membrane. Its function is as follows. F(1)F(0) ATP synthase produces ATP from ADP in the presence of a proton or sodium gradient. F-type ATPases consist of two structural domains, F(1) containing the extramembraneous catalytic core and F(0) containing the membrane proton channel, linked together by a central stalk and a peripheral stalk. During catalysis, ATP synthesis in the catalytic domain of F(1) is coupled via a rotary mechanism of the central stalk subunits to proton translocation. In terms of biological role, this protein is part of the stalk that links CF(0) to CF(1). It either transmits conformational changes from CF(0) to CF(1) or is implicated in proton conduction. The polypeptide is ATP synthase subunit delta (Polaromonas naphthalenivorans (strain CJ2)).